The chain runs to 142 residues: MLEEFKKFALRGNVVDLAVGVIIGAAFGAIVNSLVQDVIMPIIGAITGGLDFSNYYIPLSSKVQAGMPYAEAKKVGAVIGYGQFLTLAVNFTIIAFVLFMVIRAMNGLKSKEEAKPKPEAEVPADVKLLAEIRDLLAARREA.

The next 3 helical transmembrane spans lie at V14–L34, V38–P58, and G82–I102.

The protein belongs to the MscL family. In terms of assembly, homopentamer.

It localises to the cell inner membrane. Functionally, channel that opens in response to stretch forces in the membrane lipid bilayer. May participate in the regulation of osmotic pressure changes within the cell. This chain is Large-conductance mechanosensitive channel, found in Methylorubrum populi (strain ATCC BAA-705 / NCIMB 13946 / BJ001) (Methylobacterium populi).